The primary structure comprises 175 residues: Alpha-crystallin B chain (175 aa).

Residue Met-1 is modified to N-acetylmethionine. Ser-19 is subject to Phosphoserine. Ser-41 carries O-linked (GlcNAc) serine glycosylation. A phosphoserine mark is found at Ser-45 and Ser-59. The region spanning 56 to 164 (RAPSWIDTGL…PERTIPITRE (109 aa)) is the sHSP domain. His-83 lines the Zn(2+) pocket. Lys-92 is subject to N6-acetyllysine. 4 residues coordinate Zn(2+): His-104, Glu-106, His-111, and His-119. The tract at residues 139–175 (SDGVLTMNGPRKQASGPERTIPITREEKPAVTAAPKK) is disordered. The residue at position 166 (Lys-166) is an N6-acetyllysine. Thr-170 carries O-linked (GlcNAc) threonine glycosylation.

The protein belongs to the small heat shock protein (HSP20) family. Heteromer composed of three CRYAA and one CRYAB subunits. Aggregates with homologous proteins, including the small heat shock protein HSPB1, to form large heteromeric complexes. Inter-subunit bridging via zinc ions enhances stability, which is crucial as there is no protein turn over in the lens. Interacts with HSPBAP1 and TTN/titin. Interacts with TMEM109; in the cellular response to DNA damage. Interacts with DES; binds rapidly during early stages of DES filament assembly and a reduced binding seen in the later stages. Interacts with ATP6V1A and with MTOR, forming a ternary complex.

The protein localises to the cytoplasm. It localises to the nucleus. Its subcellular location is the secreted. The protein resides in the lysosome. Functionally, may contribute to the transparency and refractive index of the lens. Has chaperone-like activity, preventing aggregation of various proteins under a wide range of stress conditions. In lens epithelial cells, stabilizes the ATP6V1A protein, preventing its degradation by the proteasome. This chain is Alpha-crystallin B chain (CRYAB), found in Ovis aries (Sheep).